Here is a 265-residue protein sequence, read N- to C-terminus: Probable S-methyl-5'-thioinosine phosphorylase (265 aa).

Phosphate contacts are provided by residues S15 and 55-56; that span reads RH. Residue M187 participates in substrate binding. A phosphate-binding site is contributed by T188. A substrate-binding site is contributed by 211–213; that stretch reads NYA.

It belongs to the PNP/MTAP phosphorylase family. MTAP subfamily. Homotrimer.

It carries out the reaction S-methyl-5'-thioinosine + phosphate = 5-(methylsulfanyl)-alpha-D-ribose 1-phosphate + hypoxanthine. It participates in purine metabolism; purine nucleoside salvage. Catalyzes the reversible phosphorylation of S-methyl-5'-thioinosine (MTI) to hypoxanthine and 5-methylthioribose-1-phosphate. Involved in the breakdown of S-methyl-5'-thioadenosine (MTA), a major by-product of polyamine biosynthesis. Catabolism of (MTA) occurs via deamination to MTI and phosphorolysis to hypoxanthine. This is Probable S-methyl-5'-thioinosine phosphorylase from Thermodesulfovibrio yellowstonii (strain ATCC 51303 / DSM 11347 / YP87).